We begin with the raw amino-acid sequence, 252 residues long: Adenosylcobinamide-GDP ribazoletransferase (252 aa).

The next 7 membrane-spanning stretches (helical) occupy residues 35–55 (AMLPLIGLIVGCIQWVVFYIL), 58–78 (IFPANITAIFIILVGMVLIGG), 113–133 (FAVLALIFDILIKYSALSFII), 139–159 (YAIIITPIMSRCTLVFLFLIG), 170–190 (LFIENVSVKEFIISFIFMIVP), 192–212 (VLLIGYKYSVIIIVVSFIITL), and 231–251 (GANNEIVEMFTMLVFVALLYI).

It belongs to the CobS family. Requires Mg(2+) as cofactor.

It is found in the cell membrane. It carries out the reaction alpha-ribazole + adenosylcob(III)inamide-GDP = adenosylcob(III)alamin + GMP + H(+). The catalysed reaction is alpha-ribazole 5'-phosphate + adenosylcob(III)inamide-GDP = adenosylcob(III)alamin 5'-phosphate + GMP + H(+). It participates in cofactor biosynthesis; adenosylcobalamin biosynthesis; adenosylcobalamin from cob(II)yrinate a,c-diamide: step 7/7. In terms of biological role, joins adenosylcobinamide-GDP and alpha-ribazole to generate adenosylcobalamin (Ado-cobalamin). Also synthesizes adenosylcobalamin 5'-phosphate from adenosylcobinamide-GDP and alpha-ribazole 5'-phosphate. The protein is Adenosylcobinamide-GDP ribazoletransferase of Clostridium tetani (strain Massachusetts / E88).